A 504-amino-acid chain; its full sequence is Maturase K (504 aa).

The protein belongs to the intron maturase 2 family. MatK subfamily.

It localises to the plastid. Its subcellular location is the chloroplast. Functionally, usually encoded in the trnK tRNA gene intron. Probably assists in splicing its own and other chloroplast group II introns. In Adenostoma fasciculatum (Chamise), this protein is Maturase K.